The primary structure comprises 607 residues: Guanine nucleotide-binding protein-like 1 (607 aa).

Residues 1–14 show a composition bias toward basic residues; it reads MPRKKPFSVKQKKK. The tract at residues 1–81 is disordered; that stretch reads MPRKKPFSVK…GPRGYDPNRY (81 aa). Positions 15 to 26 are enriched in basic and acidic residues; sequence QLQDKRERKRGL. Ser-32, Ser-33, and Ser-34 each carry phosphoserine. Thr-48 and Thr-50 each carry phosphothreonine. Phosphoserine is present on residues Ser-51 and Ser-68. Residues 178–418 form the CP-type G domain; that stretch reads WRQLWRVLEM…LCDCPGLIFP (241 aa). 225 to 228 serves as a coordination point for GTP; it reads NKVD. Phosphoserine is present on Ser-324. Residues 367 to 374 and 411 to 415 each bind GTP; these read GFPNVGKS and DCPGL. The disordered stretch occupies residues 547–607; it reads GPAGDEEEEE…PYALLGEDEC (61 aa). Residues 550–584 are compositionally biased toward acidic residues; that stretch reads GDEEEEEEEELSSSCEEEGEEDRDADEEGEGDEET. 3 positions are modified to phosphoserine: Ser-561, Ser-562, and Ser-563.

This sequence belongs to the TRAFAC class YlqF/YawG GTPase family.

Its function is as follows. Possible regulatory or functional link with the histocompatibility cluster. This Homo sapiens (Human) protein is Guanine nucleotide-binding protein-like 1 (GNL1).